The chain runs to 338 residues: Cell division protein ZipA (338 aa).

Topologically, residues methionine 1–serine 2 are periplasmic. Residues leucine 3–valine 23 form a helical membrane-spanning segment. At arginine 24–alanine 338 the chain is on the cytoplasmic side. Residues serine 33–asparagine 192 form a disordered region. Composition is skewed to basic and acidic residues over residues threonine 70–methionine 81 and glutamate 138–glutamate 162.

The protein belongs to the ZipA family. Interacts with FtsZ via their C-terminal domains.

Its subcellular location is the cell inner membrane. In terms of biological role, essential cell division protein that stabilizes the FtsZ protofilaments by cross-linking them and that serves as a cytoplasmic membrane anchor for the Z ring. Also required for the recruitment to the septal ring of downstream cell division proteins. The chain is Cell division protein ZipA from Marinobacter nauticus (strain ATCC 700491 / DSM 11845 / VT8) (Marinobacter aquaeolei).